The chain runs to 312 residues: Malate dehydrogenase (312 aa).

Residues 12–17 and aspartate 36 each bind NAD(+); that span reads GAGFTG. Residues arginine 87 and arginine 93 each coordinate substrate. NAD(+) is bound by residues asparagine 100 and 123–125; that span reads LTN. A substrate-binding site is contributed by asparagine 125. Phosphoserine is present on serine 149. Arginine 156 is a substrate binding site. The active-site Proton acceptor is histidine 180.

This sequence belongs to the LDH/MDH superfamily. MDH type 3 family.

The enzyme catalyses (S)-malate + NAD(+) = oxaloacetate + NADH + H(+). Catalyzes the reversible oxidation of malate to oxaloacetate. The chain is Malate dehydrogenase from Anoxybacillus flavithermus (strain DSM 21510 / WK1).